Here is a 212-residue protein sequence, read N- to C-terminus: Thymidylate kinase (212 aa).

ATP is bound by residues 16-21 (RAGKTT), arginine 97, arginine 182, and lysine 192.

Belongs to the thymidylate kinase family. Mg(2+) serves as cofactor.

It carries out the reaction dTMP + ATP = dTDP + ADP. The protein operates within pyrimidine metabolism; dTTP biosynthesis. Its function is as follows. Catalyzes the phosphorylation of thymidine monophosphate (dTMP) to thymidine diphosphate (dTDP), the immediate precursor for the DNA building block dTTP, with ATP as the preferred phosphoryl donor in the presence of Mg(2+). The polypeptide is Thymidylate kinase (dtymk) (Danio rerio (Zebrafish)).